Reading from the N-terminus, the 141-residue chain is Holo-[acyl-carrier-protein] synthase (141 aa).

Positions 8 and 63 each coordinate Mg(2+).

This sequence belongs to the P-Pant transferase superfamily. AcpS family. It depends on Mg(2+) as a cofactor.

The protein resides in the cytoplasm. The catalysed reaction is apo-[ACP] + CoA = holo-[ACP] + adenosine 3',5'-bisphosphate + H(+). Transfers the 4'-phosphopantetheine moiety from coenzyme A to a Ser of acyl-carrier-protein. The chain is Holo-[acyl-carrier-protein] synthase from Rhodospirillum centenum (strain ATCC 51521 / SW).